The following is a 209-amino-acid chain: Dof zinc finger protein DOF1.6 (209 aa).

Positions 1–17 are enriched in polar residues; sequence MPSEPNQTRPTRVQPST. Residues 1–29 form a disordered region; sequence MPSEPNQTRPTRVQPSTAAYPPPNLAEPL. Positions 20-29 are enriched in pro residues; sequence YPPPNLAEPL. The segment at 29–83 adopts a Dof-type zinc-finger fold; that stretch reads LPCPRCNSTTTKFCYYNNYNLAQPRYYCKSCRRYWTQGGTLRDVPVGGGTRRSSS. The Zn(2+) site is built by cysteine 31, cysteine 34, cysteine 56, and cysteine 59. The disordered stretch occupies residues 70 to 116; the sequence is RDVPVGGGTRRSSSKRHRSFSTTATSSSSSSSVITTTTQEPATTEAS. Residues 89–116 are compositionally biased toward low complexity; the sequence is FSTTATSSSSSSSVITTTTQEPATTEAS.

The protein resides in the nucleus. Transcription factor that binds specifically to a 5'-AA[AG]G-3' consensus core sequence. This chain is Dof zinc finger protein DOF1.6 (DOF1.6), found in Arabidopsis thaliana (Mouse-ear cress).